The following is a 689-amino-acid chain: Small ribosomal subunit protein mS39 (689 aa).

Residues 1–37 (MAVVSAVRWLGLRSRLGQPLTGRRAGLCEQARSCRFY) constitute a mitochondrion transit peptide. Residue lysine 126 is modified to N6-acetyllysine. PPR repeat units lie at residues 149 to 183 (IKDI…GTTV), 184 to 219 (SLET…EALE), 255 to 289 (NEHS…RLHA), 290 to 330 (DVYT…KVKP), 331 to 367 (NLQT…GIEP), 368 to 409 (SLAT…SPKD), 412 to 446 (DDKF…DNWK), 454 to 488 (RNFY…AYFP), 489 to 523 (HSQT…GHTF), and 572 to 606 (PATS…NKIP). Positions 665–689 (NLTALTSDSDTDSSSDSDSDTSEGK) are disordered. A compositionally biased stretch (acidic residues) spans 673–689 (SDTDSSSDSDSDTSEGK).

The protein belongs to the mitochondrion-specific ribosomal protein mS39 family. In terms of assembly, component of the mitochondrial small ribosomal subunit (mt-SSU). Mature mammalian 55S mitochondrial ribosomes consist of a small (28S) and a large (39S) subunit. The 28S small subunit contains a 12S ribosomal RNA (12S mt-rRNA) and 30 different proteins. The 39S large subunit contains a 16S rRNA (16S mt-rRNA), a copy of mitochondrial valine transfer RNA (mt-tRNA(Val)), which plays an integral structural role, and 52 different proteins. Associated with the 12S mitochondrial rRNA (12S mt-rRNA). Abundant in testes, skeletal muscle and heart tissue.

Its subcellular location is the mitochondrion. Mitochondrial RNA-binding protein that has a role in mitochondrial translation. The protein is Small ribosomal subunit protein mS39 (PTCD3) of Homo sapiens (Human).